The following is a 216-amino-acid chain: Large ribosomal subunit protein bL25 (216 aa).

2 disordered regions span residues 1-21 (MAETQTLKAEAREKGSKGAVR) and 192-216 (SADNEAKTEEAGEDKSEEKSSGKED). The span at 195–216 (NEAKTEEAGEDKSEEKSSGKED) shows a compositional bias: basic and acidic residues.

It belongs to the bacterial ribosomal protein bL25 family. CTC subfamily. As to quaternary structure, part of the 50S ribosomal subunit; part of the 5S rRNA/L5/L18/L25 subcomplex. Contacts the 5S rRNA. Binds to the 5S rRNA independently of L5 and L18.

In terms of biological role, this is one of the proteins that binds to the 5S RNA in the ribosome where it forms part of the central protuberance. In Parvibaculum lavamentivorans (strain DS-1 / DSM 13023 / NCIMB 13966), this protein is Large ribosomal subunit protein bL25.